A 133-amino-acid chain; its full sequence is Large-conductance mechanosensitive channel (133 aa).

Transmembrane regions (helical) follow at residues 14-34 and 67-87; these read VIDL…VSSL and GNFI…FMFV.

It belongs to the MscL family. In terms of assembly, homopentamer.

It is found in the cell membrane. Channel that opens in response to stretch forces in the membrane lipid bilayer. May participate in the regulation of osmotic pressure changes within the cell. This Bacillus mycoides (strain KBAB4) (Bacillus weihenstephanensis) protein is Large-conductance mechanosensitive channel.